The chain runs to 442 residues: Chromosomal replication initiator protein DnaA (442 aa).

The interval 1 to 75 is domain I, interacts with DnaA modulators; that stretch reads MDAWPRCLER…GNGEVALAVG (75 aa). Residues 75-104 form a domain II region; that stretch reads GSRPRAPEPLPAPQAVASAPAAAPIVPFAG. The domain III, AAA+ region stretch occupies residues 105–322; that stretch reads NLDSHYTFAN…GALNTLVARA (218 aa). The ATP site is built by glycine 150, glycine 152, lysine 153, and threonine 154. The segment at 323-442 is domain IV, binds dsDNA; it reads NFTGRSITVE…WEKLIRKLSE (120 aa).

The protein belongs to the DnaA family. Oligomerizes as a right-handed, spiral filament on DNA at oriC.

It is found in the cytoplasm. In terms of biological role, plays an essential role in the initiation and regulation of chromosomal replication. ATP-DnaA binds to the origin of replication (oriC) to initiate formation of the DNA replication initiation complex once per cell cycle. Binds the DnaA box (a 9 base pair repeat at the origin) and separates the double-stranded (ds)DNA. Forms a right-handed helical filament on oriC DNA; dsDNA binds to the exterior of the filament while single-stranded (ss)DNA is stabiized in the filament's interior. The ATP-DnaA-oriC complex binds and stabilizes one strand of the AT-rich DNA unwinding element (DUE), permitting loading of DNA polymerase. After initiation quickly degrades to an ADP-DnaA complex that is not apt for DNA replication. Binds acidic phospholipids. In Xanthomonas campestris pv. campestris (strain 8004), this protein is Chromosomal replication initiator protein DnaA.